Reading from the N-terminus, the 245-residue chain is MNPKSNPDTIFSAPIDKIGDFTFDERVAEVFPDMIQRSVPGYSNIISAIGMLAERFVKPHSNVYDLGCSLGAATLSMRRHIKQEGCQIIAVDNSKAMVERCKLHVNAYRSDTPVNVIEADIRHIDIENASVVVLNFTLQFLSPEDRYVLLEKIYAGLRPGGILILSEKYVFEDQVSNELLIDLHHDFKRANGYSELEISQKRSAIENVMRPDSKKQHKERFAQIGFSSYDVWFQCFNFGSMFAIK.

S-adenosyl-L-methionine is bound by residues tyrosine 42, 67–69 (GCS), 92–93 (DN), 120–121 (DI), asparagine 135, and arginine 202.

The protein belongs to the class I-like SAM-binding methyltransferase superfamily. Cx-SAM synthase family. In terms of assembly, homodimer.

The enzyme catalyses prephenate + S-adenosyl-L-methionine = carboxy-S-adenosyl-L-methionine + 3-phenylpyruvate + H2O. In terms of biological role, catalyzes the conversion of S-adenosyl-L-methionine (SAM) to carboxy-S-adenosyl-L-methionine (Cx-SAM). This Vibrio vulnificus (strain CMCP6) protein is Carboxy-S-adenosyl-L-methionine synthase.